Consider the following 249-residue polypeptide: 2,3-bisphosphoglycerate-dependent phosphoglycerate mutase (249 aa).

Residues arginine 11 to asparagine 18, threonine 24 to glycine 25, arginine 63, glutamate 90 to tyrosine 93, lysine 101, arginine 117 to arginine 118, and glycine 185 to asparagine 186 contribute to the substrate site. Residue histidine 12 is the Tele-phosphohistidine intermediate of the active site. The active-site Proton donor/acceptor is glutamate 90.

This sequence belongs to the phosphoglycerate mutase family. BPG-dependent PGAM subfamily.

The enzyme catalyses (2R)-2-phosphoglycerate = (2R)-3-phosphoglycerate. Its pathway is carbohydrate degradation; glycolysis; pyruvate from D-glyceraldehyde 3-phosphate: step 3/5. Functionally, catalyzes the interconversion of 2-phosphoglycerate and 3-phosphoglycerate. The sequence is that of 2,3-bisphosphoglycerate-dependent phosphoglycerate mutase from Leifsonia xyli subsp. xyli (strain CTCB07).